Reading from the N-terminus, the 574-residue chain is Proline--tRNA ligase (574 aa).

This sequence belongs to the class-II aminoacyl-tRNA synthetase family. ProS type 1 subfamily. In terms of assembly, homodimer.

It is found in the cytoplasm. It carries out the reaction tRNA(Pro) + L-proline + ATP = L-prolyl-tRNA(Pro) + AMP + diphosphate. Its function is as follows. Catalyzes the attachment of proline to tRNA(Pro) in a two-step reaction: proline is first activated by ATP to form Pro-AMP and then transferred to the acceptor end of tRNA(Pro). As ProRS can inadvertently accommodate and process non-cognate amino acids such as alanine and cysteine, to avoid such errors it has two additional distinct editing activities against alanine. One activity is designated as 'pretransfer' editing and involves the tRNA(Pro)-independent hydrolysis of activated Ala-AMP. The other activity is designated 'posttransfer' editing and involves deacylation of mischarged Ala-tRNA(Pro). The misacylated Cys-tRNA(Pro) is not edited by ProRS. The polypeptide is Proline--tRNA ligase (Oleidesulfovibrio alaskensis (strain ATCC BAA-1058 / DSM 17464 / G20) (Desulfovibrio alaskensis)).